The sequence spans 87 residues: Small ribosomal subunit protein bS20 (87 aa).

This sequence belongs to the bacterial ribosomal protein bS20 family.

Its function is as follows. Binds directly to 16S ribosomal RNA. This Clostridium botulinum (strain Alaska E43 / Type E3) protein is Small ribosomal subunit protein bS20.